The chain runs to 468 residues: 3-isopropylmalate dehydratase large subunit (468 aa).

[4Fe-4S] cluster is bound by residues C347, C407, and C410.

The protein belongs to the aconitase/IPM isomerase family. LeuC type 1 subfamily. Heterodimer of LeuC and LeuD. [4Fe-4S] cluster serves as cofactor.

It catalyses the reaction (2R,3S)-3-isopropylmalate = (2S)-2-isopropylmalate. Its pathway is amino-acid biosynthesis; L-leucine biosynthesis; L-leucine from 3-methyl-2-oxobutanoate: step 2/4. Catalyzes the isomerization between 2-isopropylmalate and 3-isopropylmalate, via the formation of 2-isopropylmaleate. In Rippkaea orientalis (strain PCC 8801 / RF-1) (Cyanothece sp. (strain PCC 8801)), this protein is 3-isopropylmalate dehydratase large subunit.